A 139-amino-acid chain; its full sequence is Plastocyanin (139 aa).

The N-terminal stretch at 1 to 34 (MKLIAASLRRLSLAVLTVLLVVSSFAVFTPSASA) is a signal peptide. One can recognise a Plastocyanin-like domain in the interval 35–139 (ETYTVKLGSD…GMVGKITVAG (105 aa)). Residues histidine 73, cysteine 123, histidine 126, and methionine 131 each coordinate Cu cation.

It belongs to the plastocyanin family. Cu(2+) is required as a cofactor.

The protein localises to the cellular thylakoid membrane. In terms of biological role, participates in electron transfer between P700 and the cytochrome b6-f complex in photosystem I. This Nostoc sp. (strain PCC 7120 / SAG 25.82 / UTEX 2576) protein is Plastocyanin (petE).